A 459-amino-acid chain; its full sequence is MEPGSQQQPSAPAQQPPPVGHQVVHVRTDSETDLEALFNAVMNPKNANLPQTLPMRMRKLPDSFFKQPQPEAKSHSRQASTDGGSAGALTPQHVRAHSSPASLQLAAVSPGALSPQGVVTGLAPPSAPHLRQSSYEIPDDVPLPPGWEMAKTPSGQRYFLNHIDQTTTWQDPRKAMLSQINVTAPTSPPVQQNIMTPTGPLPDGWEQALTPEGEAYFINHKNKSTSWLDPRLDPRFAMNQQRLSQNAPVKAPPALPPPSPQTGVLGSGGNQQMRLQQLQMEKERLRLKHQELLRQVRPQELALRSQIPPMEQDGGTQNPVCTTGISQELRTMTMNSSDPFLNSGTYHSRDESTESGLSMSSYSVPRTPDDFLNSVDEMDTGEAITQSTIPTQQNRFPDYLETLPGTNVDLGTLEGEAMNVEGEELMPSLQEALSSDILNDMETVLAATKLDKESFLTWL.

Positions methionine 1–alanine 13 are enriched in low complexity. The tract at residues methionine 1–glutamine 22 is disordered. Phosphoserine; by LATS1 and LATS2 occurs at positions 30, 80, 98, and 134. Disordered stretches follow at residues phenylalanine 65 to serine 99 and serine 126 to proline 145. 2 WW domains span residues valine 141–lysine 174 and glycine 199–leucine 232. The segment at asparagine 246–glycine 268 is disordered. A compositionally biased stretch (pro residues) spans lysine 250–proline 260. Positions glutamine 261–leucine 459 are transactivation domain. A coiled-coil region spans residues glycine 269 to arginine 297. The segment at glycine 344–serine 363 is disordered. Over residues glutamate 354–serine 363 the composition is skewed to polar residues.

Belongs to the YAP1 family. As to quaternary structure, interacts with tead1. Phosphorylated by lats1 and lats2; leading to cytoplasmic translocation and inactivation.

The protein resides in the cytoplasm. The protein localises to the nucleus. It is found in the cell junction. Its subcellular location is the tight junction. It localises to the cell membrane. Functionally, transcriptional regulator which can act both as a coactivator and a corepressor and is the critical downstream regulatory target in the Hippo signaling pathway that plays a pivotal role in organ size control and tumor suppression by restricting proliferation and promoting apoptosis. Plays a key role in tissue tension and 3D tissue shape by regulating cortical actomyosin network formation. Required for expansion of the neural plate and neural plate border zone progenitor pools. Acts as a direct regulator of pax3 expression via interaction with tead1. In Xenopus laevis (African clawed frog), this protein is Transcriptional coactivator YAP1-A.